Here is a 261-residue protein sequence, read N- to C-terminus: Carnitinyl-CoA dehydratase (261 aa).

Residue Glu111 is the Nucleophile of the active site. The active-site Proton acceptor is Glu131.

This sequence belongs to the enoyl-CoA hydratase/isomerase family.

It carries out the reaction (R)-carnitinyl-CoA = crotonobetainyl-CoA + H2O. It participates in amine and polyamine metabolism; carnitine metabolism. In terms of biological role, catalyzes the reversible dehydration of L-carnitinyl-CoA to crotonobetainyl-CoA. The protein is Carnitinyl-CoA dehydratase of Escherichia coli (strain ATCC 8739 / DSM 1576 / NBRC 3972 / NCIMB 8545 / WDCM 00012 / Crooks).